The chain runs to 371 residues: Chaperone protein DnaJ (371 aa).

A J domain is found at 5–70 (CYYEILNISK…SKRSRYDQFG (66 aa)). A CR-type zinc finger spans residues 127-204 (GVEKEITIPR…CYGNGKVKKQ (78 aa)). Zn(2+) contacts are provided by cysteine 140, cysteine 143, cysteine 156, cysteine 159, cysteine 178, cysteine 181, cysteine 192, and cysteine 195. CXXCXGXG motif repeat units lie at residues 140–147 (CDSCDGTG), 156–163 (CHACHGQG), 178–185 (CPVCNGTG), and 192–199 (CDACYGNG).

This sequence belongs to the DnaJ family. As to quaternary structure, homodimer. The cofactor is Zn(2+).

Its subcellular location is the cytoplasm. Participates actively in the response to hyperosmotic and heat shock by preventing the aggregation of stress-denatured proteins and by disaggregating proteins, also in an autonomous, DnaK-independent fashion. Unfolded proteins bind initially to DnaJ; upon interaction with the DnaJ-bound protein, DnaK hydrolyzes its bound ATP, resulting in the formation of a stable complex. GrpE releases ADP from DnaK; ATP binding to DnaK triggers the release of the substrate protein, thus completing the reaction cycle. Several rounds of ATP-dependent interactions between DnaJ, DnaK and GrpE are required for fully efficient folding. Also involved, together with DnaK and GrpE, in the DNA replication of plasmids through activation of initiation proteins. The protein is Chaperone protein DnaJ of Francisella tularensis subsp. holarctica (strain LVS).